The following is a 73-amino-acid chain: Homeodomain-only protein (73 aa).

Positions 3–62 (AEPANGPTEDQVEILEYNFNKVNRHPDPTTLCLIAAEAGLSEEETQKWFKQRLAQWRRSE) form a DNA-binding region, homeobox; degenerate.

In terms of assembly, interacts with serum response factor (SRF). Component of a large complex containing histone deacetylases such as HDAC2. Interacts with the acetylated forms of HSPA1A and HSPA1B. Interacts with HSPA8.

The protein localises to the nucleus. The protein resides in the cytoplasm. Its function is as follows. Atypical homeodomain protein which does not bind DNA and is required to modulate cardiac growth and development. Acts via its interaction with SRF, thereby modulating the expression of SRF-dependent cardiac-specific genes and cardiac development. Prevents SRF-dependent transcription either by inhibiting SRF binding to DNA or by recruiting histone deacetylase (HDAC) proteins that prevent transcription by SRF. Overexpression causes cardiac hypertrophy. Acts as a co-chaperone for HSPA1A and HSPA1B chaperone proteins and assists in chaperone-mediated protein refolding. The chain is Homeodomain-only protein (HOPX) from Sus scrofa (Pig).